A 72-amino-acid chain; its full sequence is Large ribosomal subunit protein uL29 (72 aa).

This sequence belongs to the universal ribosomal protein uL29 family.

The chain is Large ribosomal subunit protein uL29 from Rhodopirellula baltica (strain DSM 10527 / NCIMB 13988 / SH1).